The following is a 509-amino-acid chain: Photosystem II CP47 reaction center protein (509 aa).

6 helical membrane-spanning segments follow: residues 21-36 (SVHLMHTALVSGWAGS), 101-115 (IVLSGLLFLASIWHW), 140-156 (GIHLVLSSLLCFGFGAF), 203-218 (IAAGTVGILAGVFHLN), 237-252 (VLSSSIAAVFFASFVV), and 457-472 (NFALLFFFGHLWHGSR).

This sequence belongs to the PsbB/PsbC family. PsbB subfamily. As to quaternary structure, PSII is composed of 1 copy each of membrane proteins PsbA, PsbB, PsbC, PsbD, PsbE, PsbF, PsbH, PsbI, PsbJ, PsbK, PsbL, PsbM, PsbT, PsbY, PsbZ, Psb30/Ycf12, at least 3 peripheral proteins of the oxygen-evolving complex and a large number of cofactors. It forms dimeric complexes. The cofactor is Binds multiple chlorophylls. PSII binds additional chlorophylls, carotenoids and specific lipids..

It localises to the plastid. It is found in the chloroplast thylakoid membrane. In terms of biological role, one of the components of the core complex of photosystem II (PSII). It binds chlorophyll and helps catalyze the primary light-induced photochemical processes of PSII. PSII is a light-driven water:plastoquinone oxidoreductase, using light energy to abstract electrons from H(2)O, generating O(2) and a proton gradient subsequently used for ATP formation. The sequence is that of Photosystem II CP47 reaction center protein from Cyanidium caldarium (Red alga).